A 631-amino-acid chain; its full sequence is Fusexin 1 (631 aa).

An N-terminal signal peptide occupies residues 1 to 19 (MRRAALILAFVLFIGLSSA). A domain I N-terminus region spans residues 20-90 (TVTSADSITY…THQDSKLKYS (71 aa)). The Extracellular portion of the chain corresponds to 20 to 537 (TVTSADSITY…NLFGGSGSGD (518 aa)). A domain II N-terminus region spans residues 91 to 170 (TSTSDELRDI…KLATPAYIDN (80 aa)). Residues Asp112, Ser146, Tyr149, and Asp150 each contribute to the Ca(2+) site. The cysteines at positions 125 and 155 are disulfide-linked. A fusion loop, required for fusogenic activity, not required for membrane surface localization region spans residues 143-148 (SVTSPV). Residues 171–224 (PDEIFTAKAELQAGDKTIQSATLSNGDAGDGTVTDLGDSKISWNGNLDLGASEP) form a domain I central section region. Residues 225 to 316 (ENSRVIALYS…KDSSLDTGSF (92 aa)) form a domain II C-terminus region. Residues 317 to 348 (VYDTPELLSYPSFTVYVDAGENGYIEVTKPTG) are domain I C-terminus. Residues 349–455 (DPDIISTSST…SVSVTGIQQS (107 aa)) are domain III. 3 disulfides stabilise this stretch: Cys389/Cys432, Cys457/Cys477, and Cys490/Cys506. A disordered region spans residues 443-467 (DSTSVSVTGIQQSECNPGDQRREKN). The segment at 456–509 (ECNPGDQRREKNENDRWEIYTCQDNGLTYEYDVTCAEDEKAVAQGDNQFSCEKQ) is domain IV, required for fusogenic activity. The segment at 510–537 (DDDSGGGDNTGSDSGLFSNLFGGSGSGD) is stem. The chain crosses the membrane as a helical span at residues 538-558 (LLTQVHTALSILAGLVAGFFG). Over 559 to 590 (YRGARWIHGETDIKGGFKLESRNVSRVKRGSP) the chain is Cytoplasmic. Residues 591–611 (VAGIVGAVLGFVVGYGVASVF) traverse the membrane as a helical segment. Residue His612 is a topological domain, extracellular. The chain crosses the membrane as a helical span at residues 613-630 (PVVQIIVVLGIAVGLYYF). Arg631 is a topological domain (cytoplasmic).

Belongs to the HAP2/GCS1 family. Fusexin 1 subfamily. As to quaternary structure, monomer in solution, crystallizes as a trimer in high salt (2.5 M NaCl, 0.2 M CaCl(2)). The trimer is stabilized by interdomain contacts and numerous Ca(2+) and Na(+) ions.

It localises to the cell surface. Its subcellular location is the cell membrane. Its function is as follows. Exhibits fusogenic activity. Mediates cell-cell fusion in mammalian cells when present in both cells (bilateral fusion). The polypeptide is Fusexin 1 (Uncultured archaeon).